The sequence spans 279 residues: 1-(5-phosphoribosyl)-5-[(5-phosphoribosylamino)methylideneamino] imidazole-4-carboxamide isomerase (279 aa).

It belongs to the HisA/HisF family.

The protein resides in the cytoplasm. It catalyses the reaction 1-(5-phospho-beta-D-ribosyl)-5-[(5-phospho-beta-D-ribosylamino)methylideneamino]imidazole-4-carboxamide = 5-[(5-phospho-1-deoxy-D-ribulos-1-ylimino)methylamino]-1-(5-phospho-beta-D-ribosyl)imidazole-4-carboxamide. Its pathway is amino-acid biosynthesis; L-histidine biosynthesis; L-histidine from 5-phospho-alpha-D-ribose 1-diphosphate: step 4/9. In Candida albicans (Yeast), this protein is 1-(5-phosphoribosyl)-5-[(5-phosphoribosylamino)methylideneamino] imidazole-4-carboxamide isomerase (HIS6).